Consider the following 105-residue polypeptide: Thioredoxin (105 aa).

A Thioredoxin domain is found at 1 to 105 (MFELDKDTFE…NVEAMVKKYI (105 aa)). C29 and C32 are oxidised to a cystine.

This sequence belongs to the thioredoxin family.

Functionally, participates in various redox reactions through the reversible oxidation of its active center dithiol to a disulfide and catalyzes dithiol-disulfide exchange reactions. In Acetoanaerobium sticklandii (strain ATCC 12662 / DSM 519 / JCM 1433 / CCUG 9281 / NCIMB 10654 / HF) (Clostridium sticklandii), this protein is Thioredoxin (trxA).